Reading from the N-terminus, the 455-residue chain is T-box protein VegT (455 aa).

Residues 57-230 (LWAQFHQEGT…HNPFAKGFRE (174 aa)) constitute a DNA-binding region (T-box). Residues 229-241 (REQERSHKRDDVL) are compositionally biased toward basic and acidic residues. 2 disordered regions span residues 229-276 (REQE…RVKE) and 295-360 (ANQG…PDSD). Positions 308 to 326 (GANQEQQVPSSSSNFYNRN) are enriched in polar residues.

Forms a repression complex on the promoters of the nodal/nr1 and siamois genes with the maternal factors tcf7l1/tcf3 and pouf5.1/oct-25. Interacts (via C-terminus) with tcf7l1/tcf3 (via N-terminus). Also interacts with the other POU-domain transcription factors pou5f1.2/oct-91 and pou5f1.3/oct-60. In terms of tissue distribution, vegetally localized in oocytes and expressed in the presumptive endoderm and mesoderm at early gastrula stage. Expression is down-regulated in the endoderm by the end of gastrulation but maintained in the lateral and ventral mesoderm of the blastopore lip.

It localises to the nucleus. Transcription factor required for both mesoderm and endoderm formation in the embryo; signaling determinants and concentration levels may determine which germ layer is formed. Acts together with beta-catenin to activate genes that are responsible for mesoderm induction including wnt-8, eomes t/bra, siamois, mix1 and sox17. Directly binds to promoter DNA. Patterns the mesoderm along the dorsoventral and posterior axis. Activates siamois gene transcription when alone or in combination with beta-catenin, but inhibits siamois transcription in combination with pou5f1.1/oct-25. In Xenopus tropicalis (Western clawed frog), this protein is T-box protein VegT.